Reading from the N-terminus, the 363-residue chain is NAD(P)H-quinone oxidoreductase subunit 1, chloroplastic (363 aa).

The next 6 membrane-spanning stretches (helical) occupy residues 28 to 48, 98 to 118, 129 to 149, 253 to 273, 300 to 320, and 336 to 356; these read WVFVPILIFIVGITISVLAIV, FSFGPAISVISIILSYSVIPF, IGVFLWIAISSIAPIGLLMSG, FGLFYVASYLNLLVSSLFVTV, VFVTIIGIFITLVKTFLFIFV, and LLNLGWKFLLPISLGNLLLTT.

The protein belongs to the complex I subunit 1 family. NDH is composed of at least 16 different subunits, 5 of which are encoded in the nucleus.

The protein resides in the plastid. It localises to the chloroplast thylakoid membrane. The enzyme catalyses a plastoquinone + NADH + (n+1) H(+)(in) = a plastoquinol + NAD(+) + n H(+)(out). The catalysed reaction is a plastoquinone + NADPH + (n+1) H(+)(in) = a plastoquinol + NADP(+) + n H(+)(out). NDH shuttles electrons from NAD(P)H:plastoquinone, via FMN and iron-sulfur (Fe-S) centers, to quinones in the photosynthetic chain and possibly in a chloroplast respiratory chain. The immediate electron acceptor for the enzyme in this species is believed to be plastoquinone. Couples the redox reaction to proton translocation, and thus conserves the redox energy in a proton gradient. This Phaseolus vulgaris (Kidney bean) protein is NAD(P)H-quinone oxidoreductase subunit 1, chloroplastic.